The chain runs to 362 residues: 3-isopropylmalate dehydrogenase (362 aa).

78-91 (GYKWDSLPPHQRPE) provides a ligand contact to NAD(+). 4 residues coordinate substrate: Arg98, Arg108, Arg136, and Asp226. Mg(2+)-binding residues include Asp226, Asp250, and Asp254. 284-296 (GSAPDIAGLDKAN) provides a ligand contact to NAD(+).

The protein belongs to the isocitrate and isopropylmalate dehydrogenases family. LeuB type 1 subfamily. Homodimer. It depends on Mg(2+) as a cofactor. Requires Mn(2+) as cofactor.

Its subcellular location is the cytoplasm. It carries out the reaction (2R,3S)-3-isopropylmalate + NAD(+) = 4-methyl-2-oxopentanoate + CO2 + NADH. The protein operates within amino-acid biosynthesis; L-leucine biosynthesis; L-leucine from 3-methyl-2-oxobutanoate: step 3/4. In terms of biological role, catalyzes the oxidation of 3-carboxy-2-hydroxy-4-methylpentanoate (3-isopropylmalate) to 3-carboxy-4-methyl-2-oxopentanoate. The product decarboxylates to 4-methyl-2 oxopentanoate. In Trichormus variabilis (strain ATCC 29413 / PCC 7937) (Anabaena variabilis), this protein is 3-isopropylmalate dehydrogenase.